A 218-amino-acid polypeptide reads, in one-letter code: Adenylate kinase (218 aa).

Residue 10–15 (GAGKGT) participates in ATP binding. The interval 30–59 (STGDMLRAAVKAGSEMGLKAKAVMDAGQLV) is NMP. AMP-binding positions include Thr-31, Arg-36, 57–59 (QLV), 85–88 (GFPR), and Gln-92. Residues 122–159 (GRRVHEASGRTYHLVYNPPKVEGKDDVTGEDLVQRADD) form an LID region. ATP is bound by residues Arg-123 and 132-133 (TY). AMP is bound by residues Arg-156 and Arg-167. Residue Gly-203 participates in ATP binding.

The protein belongs to the adenylate kinase family. In terms of assembly, monomer.

Its subcellular location is the cytoplasm. It carries out the reaction AMP + ATP = 2 ADP. It functions in the pathway purine metabolism; AMP biosynthesis via salvage pathway; AMP from ADP: step 1/1. In terms of biological role, catalyzes the reversible transfer of the terminal phosphate group between ATP and AMP. Plays an important role in cellular energy homeostasis and in adenine nucleotide metabolism. This chain is Adenylate kinase, found in Marinomonas sp. (strain MWYL1).